The primary structure comprises 418 residues: Putative FBD-associated F-box protein At5g56560 (418 aa).

One can recognise an F-box domain in the interval 4–60 (QTRLSDLPDELLLKILSALPMFKVTLATRLISRRWKGPWKLVPDVTFDDDDIPFKSF). Residues 340 to 390 (LWEEPAVVAKCLSEHLEIFEWRQYEGTEQERNVAGYILANATCLKMATFST) enclose the FBD domain.

The polypeptide is Putative FBD-associated F-box protein At5g56560 (Arabidopsis thaliana (Mouse-ear cress)).